Here is a 323-residue protein sequence, read N- to C-terminus: Aspartate carbamoyltransferase catalytic subunit (323 aa).

Carbamoyl phosphate-binding residues include arginine 71 and threonine 72. Lysine 99 lines the L-aspartate pocket. The carbamoyl phosphate site is built by arginine 121, histidine 151, and glutamine 154. Arginine 184 and arginine 239 together coordinate L-aspartate. Residues glycine 280 and proline 281 each coordinate carbamoyl phosphate.

This sequence belongs to the aspartate/ornithine carbamoyltransferase superfamily. ATCase family. As to quaternary structure, heterododecamer (2C3:3R2) of six catalytic PyrB chains organized as two trimers (C3), and six regulatory PyrI chains organized as three dimers (R2).

The enzyme catalyses carbamoyl phosphate + L-aspartate = N-carbamoyl-L-aspartate + phosphate + H(+). The protein operates within pyrimidine metabolism; UMP biosynthesis via de novo pathway; (S)-dihydroorotate from bicarbonate: step 2/3. In terms of biological role, catalyzes the condensation of carbamoyl phosphate and aspartate to form carbamoyl aspartate and inorganic phosphate, the committed step in the de novo pyrimidine nucleotide biosynthesis pathway. This is Aspartate carbamoyltransferase catalytic subunit from Cupriavidus taiwanensis (strain DSM 17343 / BCRC 17206 / CCUG 44338 / CIP 107171 / LMG 19424 / R1) (Ralstonia taiwanensis (strain LMG 19424)).